Here is a 350-residue protein sequence, read N- to C-terminus: Uroporphyrinogen decarboxylase (350 aa).

Substrate is bound by residues 27 to 31 (RQAGR), Phe-46, Asp-76, Tyr-152, Ser-207, and His-321.

Belongs to the uroporphyrinogen decarboxylase family. As to quaternary structure, homodimer.

Its subcellular location is the cytoplasm. The enzyme catalyses uroporphyrinogen III + 4 H(+) = coproporphyrinogen III + 4 CO2. The protein operates within porphyrin-containing compound metabolism; protoporphyrin-IX biosynthesis; coproporphyrinogen-III from 5-aminolevulinate: step 4/4. Catalyzes the decarboxylation of four acetate groups of uroporphyrinogen-III to yield coproporphyrinogen-III. In Listeria innocua serovar 6a (strain ATCC BAA-680 / CLIP 11262), this protein is Uroporphyrinogen decarboxylase.